The primary structure comprises 517 residues: MLDLTKLIDGILKGSAQGVPAHAVGEQAIAAIGLDSSSLPTSDAIFAAVPGTRTHGAQFAGTDNAAKAVAILTDAAGLEVLNEAGETRPVIVVDDVRAVLGAASSSIYGDPSKDFTLIGVTGTSGKTTTSYLLEKGLMEAGHKVGLIGTTGTRIDGEEVPTKLTTPEAPTLQALFARMRDHGVTHVVMEVSSHALSLGRVAGSHFDVAAFTNLSQDHLDFHPTMDDYFDAKALFFRADSPLVADKQVVCVDDSWGQRMASVAADVQTVSTLGQEADFSATDINVSDSGAQSFKINAPSNQSYQVELALPGAFNVANATLAFAAAARVGVDGEAFARGMSKVAVPGRMERIDEGQDFLAVVDYAHKPAAVAAVLDTLRTQIDGRLGVVIGAGGDRDSTKRGPMGQLSAQRADLVIVTDDNPRSEVPATIRAAVTAGAQQGASESERPVEVLEIGDRAEAIRVLVEWAQPGDGIVVAGKGHEVGQLVAGVTHHFDDREEVRAALTEKLNNKLPLTTEEG.

The UDP-N-acetyl-alpha-D-muramoyl-L-alanyl-D-glutamate site is built by Leu-34 and Ser-36. ATP is bound at residue 122–128; the sequence is GTSGKTT. Residues 164–165, Ser-191, and Arg-199 contribute to the UDP-N-acetyl-alpha-D-muramoyl-L-alanyl-D-glutamate site; that span reads TT. The residue at position 231 (Lys-231) is an N6-carboxylysine. Residues Arg-394, 418 to 421, Gly-476, and Glu-480 each bind meso-2,6-diaminopimelate; that span reads DNPR. A Meso-diaminopimelate recognition motif motif is present at residues 418–421; the sequence is DNPR.

Belongs to the MurCDEF family. MurE subfamily. Mg(2+) is required as a cofactor. Post-translationally, carboxylation is probably crucial for Mg(2+) binding and, consequently, for the gamma-phosphate positioning of ATP.

The protein localises to the cytoplasm. The catalysed reaction is UDP-N-acetyl-alpha-D-muramoyl-L-alanyl-D-glutamate + meso-2,6-diaminopimelate + ATP = UDP-N-acetyl-alpha-D-muramoyl-L-alanyl-gamma-D-glutamyl-meso-2,6-diaminopimelate + ADP + phosphate + H(+). It functions in the pathway cell wall biogenesis; peptidoglycan biosynthesis. In terms of biological role, catalyzes the addition of meso-diaminopimelic acid to the nucleotide precursor UDP-N-acetylmuramoyl-L-alanyl-D-glutamate (UMAG) in the biosynthesis of bacterial cell-wall peptidoglycan. This is UDP-N-acetylmuramoyl-L-alanyl-D-glutamate--2,6-diaminopimelate ligase from Corynebacterium glutamicum (strain ATCC 13032 / DSM 20300 / JCM 1318 / BCRC 11384 / CCUG 27702 / LMG 3730 / NBRC 12168 / NCIMB 10025 / NRRL B-2784 / 534).